The primary structure comprises 206 residues: Probable nicotinate-nucleotide adenylyltransferase (206 aa).

This sequence belongs to the NadD family.

It carries out the reaction nicotinate beta-D-ribonucleotide + ATP + H(+) = deamido-NAD(+) + diphosphate. Its pathway is cofactor biosynthesis; NAD(+) biosynthesis; deamido-NAD(+) from nicotinate D-ribonucleotide: step 1/1. Catalyzes the reversible adenylation of nicotinate mononucleotide (NaMN) to nicotinic acid adenine dinucleotide (NaAD). The polypeptide is Probable nicotinate-nucleotide adenylyltransferase (Paenarthrobacter aurescens (strain TC1)).